A 207-amino-acid chain; its full sequence is Large ribosomal subunit protein bL25 (207 aa).

The interval 182–207 is disordered; that stretch reads QDLGDESVQEEQAAESAEGESEGSED.

The protein belongs to the bacterial ribosomal protein bL25 family. CTC subfamily. As to quaternary structure, part of the 50S ribosomal subunit; part of the 5S rRNA/L5/L18/L25 subcomplex. Contacts the 5S rRNA. Binds to the 5S rRNA independently of L5 and L18.

This is one of the proteins that binds to the 5S RNA in the ribosome where it forms part of the central protuberance. In Micrococcus luteus (strain ATCC 4698 / DSM 20030 / JCM 1464 / CCM 169 / CCUG 5858 / IAM 1056 / NBRC 3333 / NCIMB 9278 / NCTC 2665 / VKM Ac-2230) (Micrococcus lysodeikticus), this protein is Large ribosomal subunit protein bL25.